A 231-amino-acid polypeptide reads, in one-letter code: MSKKQRLSEEDGEVEIELDLGLSLNGRFGVDPLAKTRLMRSTSVLDLVVNDRSGLSRTCSLPVETEEEWRKRKELQSLRRLEAKRKRSEKQRKHKACGGEEKVVEEGSIGSSGSGSSGLSEVDTLLPPVQATTNKSVETSPSSAQSQPENLGKEASQNIIEDMPFVSTTGDGPNGKKINGFLYRYRKGEEVRIVCVCHGSFLSPAEFVKHAGGGDVAHPLKHIVVNPSPFL.

A compositionally biased stretch (basic residues) spans 83-96 (AKRKRSEKQRKHKA). Residues 83 to 152 (AKRKRSEKQR…SAQSQPENLG (70 aa)) are disordered. Polar residues predominate over residues 130-152 (QATTNKSVETSPSSAQSQPENLG).

Belongs to the Ninja family. In terms of assembly, forms a heterodimer with AFP2. Interacts with ABI5/DPBF1, DPBF2, AREB3/DPBF3, EEL/DPBF4, ABF1, ABF3/DPBF5 and ABF4/AREB2.

Its subcellular location is the nucleus. In terms of biological role, acts as a negative regulator of abscisic acid (ABA) response and stress responses. The polypeptide is Ninja-family protein AFP3 (AFP3) (Arabidopsis thaliana (Mouse-ear cress)).